Here is a 142-residue protein sequence, read N- to C-terminus: Regulatory protein RecX (142 aa).

The protein belongs to the RecX family.

The protein localises to the cytoplasm. Functionally, modulates RecA activity. In Thermus thermophilus (strain ATCC BAA-163 / DSM 7039 / HB27), this protein is Regulatory protein RecX.